The chain runs to 237 residues: Ribose-5-phosphate isomerase A (237 aa).

Residues 30 to 33 (SGST), 87 to 90 (DGAD), and 100 to 103 (KGGG) each bind substrate. The active-site Proton acceptor is glutamate 109. Position 127 (lysine 127) interacts with substrate.

This sequence belongs to the ribose 5-phosphate isomerase family. In terms of assembly, homodimer.

It carries out the reaction aldehydo-D-ribose 5-phosphate = D-ribulose 5-phosphate. Its pathway is carbohydrate degradation; pentose phosphate pathway; D-ribose 5-phosphate from D-ribulose 5-phosphate (non-oxidative stage): step 1/1. In terms of biological role, catalyzes the reversible conversion of ribose-5-phosphate to ribulose 5-phosphate. The sequence is that of Ribose-5-phosphate isomerase A from Prochlorococcus marinus (strain MIT 9211).